A 278-amino-acid chain; its full sequence is Tropomyosin A (278 aa).

The stretch at 1–270 (IMMAMKLEKE…YRAISGELDT (270 aa)) forms a coiled coil. The segment at 92–134 (DFEQSSGRLTETSTKLDDASKAAEESERNRKTLETRSISDDER) is disordered. A compositionally biased stretch (polar residues) spans 95–104 (QSSGRLTETS). Positions 105-134 (TKLDDASKAAEESERNRKTLETRSISDDER) are enriched in basic and acidic residues.

This sequence belongs to the tropomyosin family. Homodimer.

In terms of biological role, tropomyosin, in association with the troponin complex, plays a central role in the calcium dependent regulation of muscle contraction. This Echinococcus granulosus (Hydatid tapeworm) protein is Tropomyosin A.